The following is a 440-amino-acid chain: Acyltransferase Pun1 (440 aa).

Residues His-169 and Asp-384 each act as proton acceptor in the active site.

It belongs to the plant acyltransferase family.

It carries out the reaction vanillylamine + (6E)-8-methylnon-6-enoyl-CoA = capsaicin + CoA + H(+). The enzyme catalyses (6E)-8-methylnon-6-enoyl-CoA + 4-hydroxy-3-methoxy-benzenemethanol = capsiate + CoA. In terms of biological role, involved in the biosynthesis of capsaicinoids and capsinoids natural products, pungent alkaloids synthesized from phenylpropanoid intermediates in the placental tissue of chili pepper fruit acting as repellant on herbivorous mammals and conferring spiciness to hot peppers. Catalyzes the biosynthesis of capsaicin, a pungent component, and of capsiate, a non-pungent component, from vanillylamine and vanillyl alcohol, respectively. Can transfer an acyl from 8-methylnon-6-enoyl-CoA to vanillylamine forming capsaicin and CoA. The protein is Acyltransferase Pun1 of Capsicum frutescens (Cayenne pepper).